Reading from the N-terminus, the 525-residue chain is Glutamate--cysteine ligase (525 aa).

This sequence belongs to the glutamate--cysteine ligase type 1 family. Type 1 subfamily.

The enzyme catalyses L-cysteine + L-glutamate + ATP = gamma-L-glutamyl-L-cysteine + ADP + phosphate + H(+). It participates in sulfur metabolism; glutathione biosynthesis; glutathione from L-cysteine and L-glutamate: step 1/2. This is Glutamate--cysteine ligase from Pseudomonas putida (strain ATCC 47054 / DSM 6125 / CFBP 8728 / NCIMB 11950 / KT2440).